A 355-amino-acid polypeptide reads, in one-letter code: S-adenosylmethionine:tRNA ribosyltransferase-isomerase (355 aa).

It belongs to the QueA family. In terms of assembly, monomer.

The protein resides in the cytoplasm. It carries out the reaction 7-aminomethyl-7-carbaguanosine(34) in tRNA + S-adenosyl-L-methionine = epoxyqueuosine(34) in tRNA + adenine + L-methionine + 2 H(+). It participates in tRNA modification; tRNA-queuosine biosynthesis. Functionally, transfers and isomerizes the ribose moiety from AdoMet to the 7-aminomethyl group of 7-deazaguanine (preQ1-tRNA) to give epoxyqueuosine (oQ-tRNA). This chain is S-adenosylmethionine:tRNA ribosyltransferase-isomerase, found in Aeromonas salmonicida (strain A449).